Here is a 380-residue protein sequence, read N- to C-terminus: Cobalt-precorrin-5B C(1)-methyltransferase (380 aa).

This sequence belongs to the CbiD family.

It catalyses the reaction Co-precorrin-5B + S-adenosyl-L-methionine = Co-precorrin-6A + S-adenosyl-L-homocysteine. The protein operates within cofactor biosynthesis; adenosylcobalamin biosynthesis; cob(II)yrinate a,c-diamide from sirohydrochlorin (anaerobic route): step 6/10. Functionally, catalyzes the methylation of C-1 in cobalt-precorrin-5B to form cobalt-precorrin-6A. The protein is Cobalt-precorrin-5B C(1)-methyltransferase of Salinispora tropica (strain ATCC BAA-916 / DSM 44818 / JCM 13857 / NBRC 105044 / CNB-440).